A 77-amino-acid polypeptide reads, in one-letter code: Acyl carrier protein (77 aa).

Residues 1 to 76 (MENFDKVKDI…DAVKFINSLE (76 aa)) form the Carrier domain. An O-(pantetheine 4'-phosphoryl)serine modification is found at S36.

The protein belongs to the acyl carrier protein (ACP) family. Post-translationally, 4'-phosphopantetheine is transferred from CoA to a specific serine of apo-ACP by AcpS. This modification is essential for activity because fatty acids are bound in thioester linkage to the sulfhydryl of the prosthetic group.

It localises to the cytoplasm. It functions in the pathway lipid metabolism; fatty acid biosynthesis. Functionally, carrier of the growing fatty acid chain in fatty acid biosynthesis. The protein is Acyl carrier protein of Staphylococcus aureus (strain Mu3 / ATCC 700698).